Consider the following 349-residue polypeptide: tRNA pseudouridine synthase D (349 aa).

Phenylalanine 26 is a substrate binding site. Catalysis depends on aspartate 79, which acts as the Nucleophile. Asparagine 128 is a binding site for substrate. In terms of domain architecture, TRUD spans 154–302 (GVPNYFGSQR…VEGSRRAVLL (149 aa)). Substrate is bound at residue phenylalanine 328.

The protein belongs to the pseudouridine synthase TruD family.

The catalysed reaction is uridine(13) in tRNA = pseudouridine(13) in tRNA. Responsible for synthesis of pseudouridine from uracil-13 in transfer RNAs. In Yersinia pestis bv. Antiqua (strain Antiqua), this protein is tRNA pseudouridine synthase D.